Here is a 250-residue protein sequence, read N- to C-terminus: PHD finger protein ALFIN-LIKE 3 (250 aa).

Methionine 1 is modified (N-acetylmethionine). The tract at residues aspartate 146–histidine 192 is disordered. Positions serine 149–lysine 163 are enriched in low complexity. Acidic residues predominate over residues glutamate 179–histidine 192. The PHD-type zinc-finger motif lies at glutamate 194 to lysine 246.

This sequence belongs to the Alfin family. As to expression, ubiquitously expressed.

It is found in the nucleus. Its function is as follows. Histone-binding component that specifically recognizes H3 tails trimethylated on 'Lys-4' (H3K4me3), which mark transcription start sites of virtually all active genes. This chain is PHD finger protein ALFIN-LIKE 3 (AL3), found in Arabidopsis thaliana (Mouse-ear cress).